Consider the following 401-residue polypeptide: Probable tRNA sulfurtransferase (401 aa).

The THUMP domain maps to 60–165 (EPIIDKLKTV…QDGTYVTCHD (106 aa)). Residues 183-184 (ML), 208-209 (HF), Arg-265, Gly-287, and Gln-296 contribute to the ATP site.

It belongs to the ThiI family.

It is found in the cytoplasm. It carries out the reaction [ThiI sulfur-carrier protein]-S-sulfanyl-L-cysteine + a uridine in tRNA + 2 reduced [2Fe-2S]-[ferredoxin] + ATP + H(+) = [ThiI sulfur-carrier protein]-L-cysteine + a 4-thiouridine in tRNA + 2 oxidized [2Fe-2S]-[ferredoxin] + AMP + diphosphate. The catalysed reaction is [ThiS sulfur-carrier protein]-C-terminal Gly-Gly-AMP + S-sulfanyl-L-cysteinyl-[cysteine desulfurase] + AH2 = [ThiS sulfur-carrier protein]-C-terminal-Gly-aminoethanethioate + L-cysteinyl-[cysteine desulfurase] + A + AMP + 2 H(+). It functions in the pathway cofactor biosynthesis; thiamine diphosphate biosynthesis. Catalyzes the ATP-dependent transfer of a sulfur to tRNA to produce 4-thiouridine in position 8 of tRNAs, which functions as a near-UV photosensor. Also catalyzes the transfer of sulfur to the sulfur carrier protein ThiS, forming ThiS-thiocarboxylate. This is a step in the synthesis of thiazole, in the thiamine biosynthesis pathway. The sulfur is donated as persulfide by IscS. The sequence is that of Probable tRNA sulfurtransferase from Geobacillus thermodenitrificans (strain NG80-2).